A 359-amino-acid polypeptide reads, in one-letter code: Insulin gene enhancer protein isl-2a (359 aa).

LIM zinc-binding domains lie at 27-80 and 30-143; these read CVGC…CKRD and CGSQ…RADH. The disordered stretch occupies residues 171-190; it reads EPVPVRQPPHRNHVHKQSEK. Residues 191 to 250 constitute a DNA-binding region (homeobox); the sequence is TTRVRTVLNEKQLHTLRTCYNANPRPDALMKEQLVEMTGLSPRVIRVWFQNKRCKDKKKS. Residues 326–336 are compositionally biased toward low complexity; it reads ESGSLGNSSGS. A disordered region spans residues 326-359; that stretch reads ESGSLGNSSGSDVTSLSSQLPDTPNSMVPSPVET. Positions 337–359 are enriched in polar residues; that stretch reads DVTSLSSQLPDTPNSMVPSPVET.

It localises to the nucleus. Its function is as follows. Binds to one of the cis-acting domain of the insulin gene enhancer. May be involved in subtype specialization of primary motoneurons. The sequence is that of Insulin gene enhancer protein isl-2a (isl2a) from Danio rerio (Zebrafish).